The sequence spans 715 residues: Polyribonucleotide nucleotidyltransferase (715 aa).

The Mg(2+) site is built by Asp-490 and Asp-496. The KH domain occupies 557-616 (PRIETMTIPTDKIREVIGSGGKVIREIVETSGAKVDISDDGTIKIASANADSIKKAYDMI). The 69-residue stretch at 626–694 (GKIYVGKVVK…DRGKVRLGMK (69 aa)) folds into the S1 motif domain.

It belongs to the polyribonucleotide nucleotidyltransferase family. Mg(2+) is required as a cofactor.

It localises to the cytoplasm. It catalyses the reaction RNA(n+1) + phosphate = RNA(n) + a ribonucleoside 5'-diphosphate. Its function is as follows. Involved in mRNA degradation. Catalyzes the phosphorolysis of single-stranded polyribonucleotides processively in the 3'- to 5'-direction. This is Polyribonucleotide nucleotidyltransferase from Paracoccus denitrificans (strain Pd 1222).